Consider the following 443-residue polypeptide: Sulfoquinovose isomerase (443 aa).

The protein belongs to the SqvD family.

It carries out the reaction 6-sulfo-beta-D-quinovose = 6-deoxy-6-sulfo-D-fructose. Part of the sulfo-EMP2 pathway, a D-sulfoquinovose degradation pathway that produces sulfolactate (SL). Catalyzes the isomerization of sulfoquinovose (SQ) to 6-deoxy-6-sulfo-D-fructose (SF). The chain is Sulfoquinovose isomerase from Alkalicoccus urumqiensis (Bacillus urumqiensis).